The following is a 105-amino-acid chain: Phosphoribosyl-ATP pyrophosphatase (105 aa).

It belongs to the PRA-PH family.

Its subcellular location is the cytoplasm. It catalyses the reaction 1-(5-phospho-beta-D-ribosyl)-ATP + H2O = 1-(5-phospho-beta-D-ribosyl)-5'-AMP + diphosphate + H(+). It participates in amino-acid biosynthesis; L-histidine biosynthesis; L-histidine from 5-phospho-alpha-D-ribose 1-diphosphate: step 2/9. In Ruegeria pomeroyi (strain ATCC 700808 / DSM 15171 / DSS-3) (Silicibacter pomeroyi), this protein is Phosphoribosyl-ATP pyrophosphatase.